We begin with the raw amino-acid sequence, 220 residues long: Ribosomal RNA large subunit methyltransferase E (220 aa).

Gly-60, Trp-62, Asp-92, Asp-108, and Asp-133 together coordinate S-adenosyl-L-methionine. Residue Lys-173 is the Proton acceptor of the active site. Positions 197-220 (RKPKASRDKSSETFILGRQLKQPR) are disordered.

Belongs to the class I-like SAM-binding methyltransferase superfamily. RNA methyltransferase RlmE family.

The protein localises to the cytoplasm. The catalysed reaction is uridine(2552) in 23S rRNA + S-adenosyl-L-methionine = 2'-O-methyluridine(2552) in 23S rRNA + S-adenosyl-L-homocysteine + H(+). Specifically methylates the uridine in position 2552 of 23S rRNA at the 2'-O position of the ribose in the fully assembled 50S ribosomal subunit. The protein is Ribosomal RNA large subunit methyltransferase E of Burkholderia ambifaria (strain ATCC BAA-244 / DSM 16087 / CCUG 44356 / LMG 19182 / AMMD) (Burkholderia cepacia (strain AMMD)).